The primary structure comprises 256 residues: 5-keto-4-deoxy-D-glucarate aldolase (256 aa).

Catalysis depends on histidine 50, which acts as the Proton acceptor. Glutamine 151 contributes to the substrate binding site. A Mg(2+)-binding site is contributed by glutamate 153. Residues serine 178 and aspartate 179 each coordinate substrate. Aspartate 179 is a binding site for Mg(2+).

It belongs to the HpcH/HpaI aldolase family. KDGluc aldolase subfamily. In terms of assembly, homohexamer; trimer of dimers. Requires Mg(2+) as cofactor.

The enzyme catalyses 5-dehydro-4-deoxy-D-glucarate = 2-hydroxy-3-oxopropanoate + pyruvate. The catalysed reaction is 2-dehydro-3-deoxy-D-glucarate = 2-hydroxy-3-oxopropanoate + pyruvate. It functions in the pathway carbohydrate acid metabolism; galactarate degradation; D-glycerate from galactarate: step 2/3. In terms of biological role, catalyzes the reversible retro-aldol cleavage of both 5-keto-4-deoxy-D-glucarate and 2-keto-3-deoxy-D-glucarate to pyruvate and tartronic semialdehyde. This is 5-keto-4-deoxy-D-glucarate aldolase from Escherichia coli O157:H7 (strain EC4115 / EHEC).